A 552-amino-acid polypeptide reads, in one-letter code: Transcription factor kayak (552 aa).

Disordered stretches follow at residues 110–145 (LAQG…TDST) and 177–234 (GAAS…KRRV). Polar residues predominate over residues 111-127 (AQGSDSEDSNASYNDTQ). The span at 135–145 (TDTSSAHTDST) shows a compositional bias: low complexity. Over residues 177 to 192 (GAASVGSSNANTSNTP) the composition is skewed to polar residues. Positions 212–275 (EQKRAVRRER…NQLEYCLAAH (64 aa)) constitute a bZIP domain. Residues 214–233 (KRAVRRERNKQAAARCRKRR) are basic motif. Residues 240-247 (LTEEVEQL) are leucine-zipper. Over residues 304–325 (AGSSGSGASSHHNHNSNDSSNG) the composition is skewed to low complexity. 3 disordered regions span residues 304 to 346 (AGSS…PLDL), 365 to 390 (LDGA…TLPP), and 514 to 552 (GGTG…LVSL). The segment covering 333–343 (TLNSTGRSNSP) has biased composition (polar residues). A Phosphoserine modification is found at serine 342.

It belongs to the bZIP family. Fos subfamily. As to quaternary structure, homodimer. Heterodimer with Jra. The kay-Jra heterodimer binds more stably to the AP-1 site than either of the two proteins alone.

Its subcellular location is the nucleus. Developmentally regulated transcription factor AP-1 binds and recognizes the enhancer DNA sequence: 5'-TGA[CG]TCA-3'. May play a role in the function or determination of a particular subset of cells in the developing embryo. It is able to carry out its function either independently of or in conjunction with Jra. The sequence is that of Transcription factor kayak from Drosophila yakuba (Fruit fly).